Consider the following 275-residue polypeptide: Bis(5'-nucleosyl)-tetraphosphatase, symmetrical (275 aa).

It belongs to the Ap4A hydrolase family.

It catalyses the reaction P(1),P(4)-bis(5'-adenosyl) tetraphosphate + H2O = 2 ADP + 2 H(+). Hydrolyzes diadenosine 5',5'''-P1,P4-tetraphosphate to yield ADP. The sequence is that of Bis(5'-nucleosyl)-tetraphosphatase, symmetrical (apaH) from Haemophilus influenzae (strain ATCC 51907 / DSM 11121 / KW20 / Rd).